A 229-amino-acid chain; its full sequence is Large ribosomal subunit protein uL1 (229 aa).

This sequence belongs to the universal ribosomal protein uL1 family. In terms of assembly, part of the 50S ribosomal subunit.

Its function is as follows. Binds directly to 23S rRNA. The L1 stalk is quite mobile in the ribosome, and is involved in E site tRNA release. In terms of biological role, protein L1 is also a translational repressor protein, it controls the translation of the L11 operon by binding to its mRNA. The protein is Large ribosomal subunit protein uL1 of Clostridium botulinum (strain Alaska E43 / Type E3).